We begin with the raw amino-acid sequence, 355 residues long: Protein RecA (355 aa).

Residue 78–85 (GPESSGKT) coordinates ATP.

It belongs to the RecA family.

It localises to the cytoplasm. Functionally, can catalyze the hydrolysis of ATP in the presence of single-stranded DNA, the ATP-dependent uptake of single-stranded DNA by duplex DNA, and the ATP-dependent hybridization of homologous single-stranded DNAs. It interacts with LexA causing its activation and leading to its autocatalytic cleavage. In Rhodobacter capsulatus (Rhodopseudomonas capsulata), this protein is Protein RecA.